Here is a 181-residue protein sequence, read N- to C-terminus: Large ribosomal subunit protein uL5 (181 aa).

It belongs to the universal ribosomal protein uL5 family. In terms of assembly, part of the 50S ribosomal subunit; part of the 5S rRNA/L5/L18/L25 subcomplex. Contacts the 5S rRNA and the P site tRNA. Forms a bridge to the 30S subunit in the 70S ribosome.

Functionally, this is one of the proteins that bind and probably mediate the attachment of the 5S RNA into the large ribosomal subunit, where it forms part of the central protuberance. In the 70S ribosome it contacts protein S13 of the 30S subunit (bridge B1b), connecting the 2 subunits; this bridge is implicated in subunit movement. Contacts the P site tRNA; the 5S rRNA and some of its associated proteins might help stabilize positioning of ribosome-bound tRNAs. The protein is Large ribosomal subunit protein uL5 of Acaryochloris marina (strain MBIC 11017).